The sequence spans 207 residues: MGGKWSKSSIVGWPEVRERIRNTPTAAEGVGAVSQDLDRHGAITSSNTAANNPDCAWLEAQEEDSEVGFPVRPQVPLRPMTFKGAFDLSFFLKEKGGLDGLIYSKKRQEILDLWVYNTQGYFPDWQNYTPGPGTRFPLTFGWCFKLVPMDPAEVEEANKGENNSLLHPICQHGMEDEDREVLVWRFDSSLARRHIARELHPEYYKDC.

Gly-2 is lipidated: N-myristoyl glycine; by host. Ser-6 carries the phosphoserine; by host modification. The segment at 62–66 (EEDSE) is acidic; interacts with host PACS1 and PACS2; stabilizes the interaction of NEF/MHC-I with host AP1M1; necessary for MHC-I internalization. The segment at 70–79 (PVRPQVPLRP) is SH3-binding; interaction with Src family tyrosine kinases. The PxxP; stabilizes the interaction of NEF/MHC-I with host AP1M1; necessary for MHC-I internalization motif lies at 73-76 (PQVP). The tract at residues 109 to 125 (EILDLWVYNTQGYFPDW) is mediates dimerization, Nef-PTE1 interaction. The binding to ATP6V1H stretch occupies residues 149 to 181 (MDPAEVEEANKGENNSLLHPICQHGMEDEDREV). Positions 165–166 (LL) match the Dileucine internalization motif; necessary for CD4 internalization motif. Positions 175 to 176 (ED) match the Diacidic; necessary for CD4 internalization motif.

Belongs to the lentivirus primate group Nef protein family. As to quaternary structure, monomer; cytosolic form. Homodimer; membrane bound form. Interacts with Nef associated p21-activated kinase (PAK2); this interaction activates PAK2. Associates with the Nef-MHC-I-AP1 complex; this complex is required for MHC-I internalization. Interacts (via C-terminus) with host PI3-kinase. Interacts with host PACS1; this interaction seems to be weak. Interacts with host PACS2. Interacts with host LCK and MAPK3; these interactions inhibit the kinase activity of the latter. Interacts with host ATP6V1H; this interaction may play a role in CD4 endocytosis. Associates with the CD4-Nef-AP2 complex; this complex is required for CD4 internalization. Interacts with host AP2 subunit alpha and AP2 subunit sigma2. Interacts with TCR-zeta chain; this interaction up-regulates the Fas ligand (FasL) surface expression. Interacts with host HCK, LYN, and SRC; these interactions activate the Src family kinases. Interacts with MAP3K5; this interaction inhibits the Fas and TNFR-mediated death signals. Interacts with beta-COP and PTE1. Interacts with human RACK1; this increases Nef phosphorylation by PKC. Interacts with TP53; this interaction decreases the half-life of TP53, protecting the infected cell against p53-mediated apoptosis. Post-translationally, the virion-associated Nef proteins are cleaved by the viral protease to release the soluble C-terminal core protein. Nef is probably cleaved concomitantly with viral structural proteins on maturation of virus particles. Myristoylated. In terms of processing, phosphorylated on serine residues, probably by host PKCdelta and theta.

The protein localises to the host cell membrane. It is found in the virion. It localises to the secreted. The protein resides in the host Golgi apparatus membrane. Factor of infectivity and pathogenicity, required for optimal virus replication. Alters numerous pathways of T-lymphocyte function and down-regulates immunity surface molecules in order to evade host defense and increase viral infectivity. Alters the functionality of other immunity cells, like dendritic cells, monocytes/macrophages and NK cells. In terms of biological role, in infected CD4(+) T-lymphocytes, down-regulates the surface MHC-I, mature MHC-II, CD4, CD28, CCR5 and CXCR4 molecules. Mediates internalization and degradation of host CD4 through the interaction of with the cytoplasmic tail of CD4, the recruitment of AP-2 (clathrin adapter protein complex 2), internalization through clathrin coated pits, and subsequent transport to endosomes and lysosomes for degradation. Diverts host MHC-I molecules to the trans-Golgi network-associated endosomal compartments by an endocytic pathway to finally target them for degradation. MHC-I down-regulation may involve AP-1 (clathrin adapter protein complex 1) or possibly Src family kinase-ZAP70/Syk-PI3K cascade recruited by PACS2. In consequence infected cells are masked for immune recognition by cytotoxic T-lymphocytes. Decreasing the number of immune receptors also prevents reinfection by more HIV particles (superinfection). Down-regulates host SERINC3 and SERINC5 thereby excluding these proteins from the viral particles. Virion infectivity is drastically higher when SERINC3 or SERINC5 are excluded from the viral envelope, because these host antiviral proteins impair the membrane fusion event necessary for subsequent virion penetration. Functionally, bypasses host T-cell signaling by inducing a transcriptional program nearly identical to that of anti-CD3 cell activation. Interaction with TCR-zeta chain up-regulates the Fas ligand (FasL). Increasing surface FasL molecules and decreasing surface MHC-I molecules on infected CD4(+) cells send attacking cytotoxic CD8+ T-lymphocytes into apoptosis. Its function is as follows. Plays a role in optimizing the host cell environment for viral replication without causing cell death by apoptosis. Protects the infected cells from apoptosis in order to keep them alive until the next virus generation is ready to strike. Inhibits the Fas and TNFR-mediated death signals by blocking MAP3K5/ASK1. Decreases the half-life of TP53, protecting the infected cell against p53-mediated apoptosis. Inhibits the apoptotic signals regulated by the Bcl-2 family proteins through the formation of a Nef/PI3-kinase/PAK2 complex that leads to activation of PAK2 and induces phosphorylation of host BAD. Extracellular Nef protein targets CD4(+) T-lymphocytes for apoptosis by interacting with CXCR4 surface receptors. In Homo sapiens (Human), this protein is Protein Nef.